The sequence spans 186 residues: Ribosome-recycling factor (186 aa).

Belongs to the RRF family.

The protein localises to the cytoplasm. In terms of biological role, responsible for the release of ribosomes from messenger RNA at the termination of protein biosynthesis. May increase the efficiency of translation by recycling ribosomes from one round of translation to another. This Phocaeicola vulgatus (strain ATCC 8482 / DSM 1447 / JCM 5826 / CCUG 4940 / NBRC 14291 / NCTC 11154) (Bacteroides vulgatus) protein is Ribosome-recycling factor.